Here is a 623-residue protein sequence, read N- to C-terminus: Protein EDS1L (623 aa).

At Ala-2 the chain carries N-acetylalanine. Ser-123 serves as the catalytic Nucleophile. Active-site charge relay system residues include Asp-187 and His-317.

In terms of assembly, homodimer. Interacts with RPS4, RPS6, SNC1, SRFR1, AvrRps4 and HopA1. Interacts with PAD4 (via N-terminus). Interacts with SAG101. EDS1-SAG101 and EDS1-PAD4 form separate complexes in pathogen-unchallenged cells.

It localises to the nucleus. It is found in the cytoplasm. The protein resides in the microsome. Its function is as follows. Positive regulator of basal resistance and of effector-triggered immunity specifically mediated by TIR-NB-LRR resistance proteins. Disruption by bacterial effector of EDS1-TIR-NB-LRR resistance protein interactions constitutes the first step in resistance activation. Triggers early plant defenses and hypersensitive response independently of PAD4, and then recruits PAD4 to potentiate plant defenses through the accumulation of salicylic acid. Nuclear localization is essential for basal and TIR-NB-LRR-conditioned immunity and for reprogramming defense gene expression, while cytoplasmic EDS1 is required to induce a complete immune response. Heterodimerization with PAD4 or SGA101 is necessary for TNL-mediated effector-triggered immunity. Contributes to nonhost resistance against E.amylovora. Has no direct lipase activity. The protein is Protein EDS1L of Arabidopsis thaliana (Mouse-ear cress).